Reading from the N-terminus, the 138-residue chain is Nucleoside diphosphate kinase (138 aa).

The ATP site is built by Lys-9, Phe-57, Arg-85, Thr-91, Arg-102, and Asn-112. His-115 serves as the catalytic Pros-phosphohistidine intermediate.

It belongs to the NDK family. As to quaternary structure, homotetramer. The cofactor is Mg(2+).

Its subcellular location is the cytoplasm. It catalyses the reaction a 2'-deoxyribonucleoside 5'-diphosphate + ATP = a 2'-deoxyribonucleoside 5'-triphosphate + ADP. The catalysed reaction is a ribonucleoside 5'-diphosphate + ATP = a ribonucleoside 5'-triphosphate + ADP. Its function is as follows. Major role in the synthesis of nucleoside triphosphates other than ATP. The ATP gamma phosphate is transferred to the NDP beta phosphate via a ping-pong mechanism, using a phosphorylated active-site intermediate. This Deinococcus deserti (strain DSM 17065 / CIP 109153 / LMG 22923 / VCD115) protein is Nucleoside diphosphate kinase.